The sequence spans 367 residues: Cyclin-D3-2 (367 aa).

Low complexity predominate over residues 324–335 (STTASVSSSSSS). A disordered region spans residues 324–347 (STTASVSSSSSSPEPLLKRRRVQE).

Belongs to the cyclin family. Cyclin D subfamily. Interacts with CDKA-1. In terms of tissue distribution, expressed in developing vegetative and floral primordia.

In terms of biological role, promotes divisions in the guard cells (GCs) after the guard mother cells (GMC) symmetric division when in the presence of CDKA-1. The polypeptide is Cyclin-D3-2 (CYCD3-2) (Arabidopsis thaliana (Mouse-ear cress)).